The primary structure comprises 255 residues: Putative mediator of RNA polymerase II transcription subunit 30 (255 aa).

Residues 58-107 show a composition bias toward low complexity; sequence QSQQLQQPQSIPSSTNNSTNTNTNNSTTTTTTSSTSSTTTPTTTTSTTSP. Disordered stretches follow at residues 58-133 and 177-207; these read QSQQ…TLNL and NIDN…IEKQ. The span at 108–133 shows a compositional bias: polar residues; it reads LNSKDSTATTTTKEQPSSPTLPTLNL. Over residues 177–189 the composition is skewed to basic and acidic residues; it reads NIDNDDTIMKDDN. Low complexity predominate over residues 190–201; that stretch reads NNSSTSAPTTTT.

Belongs to the Mediator complex subunit 30 family. Highly divergent. In terms of assembly, component of the Mediator complex.

It is found in the nucleus. Functionally, component of the Mediator complex, a coactivator involved in the regulated transcription of nearly all RNA polymerase II-dependent genes. Mediator functions as a bridge to convey information from gene-specific regulatory proteins to the basal RNA polymerase II transcription machinery. Mediator is recruited to promoters by direct interactions with regulatory proteins and serves as a scaffold for the assembly of a functional preinitiation complex with RNA polymerase II and the general transcription factors. This Dictyostelium discoideum (Social amoeba) protein is Putative mediator of RNA polymerase II transcription subunit 30 (med30).